A 483-amino-acid chain; its full sequence is Regulatory protein ViaA (483 aa).

This sequence belongs to the ViaA family. Homodimer. Interacts with RavA.

The protein localises to the cytoplasm. In terms of biological role, component of the RavA-ViaA chaperone complex, which may act on the membrane to optimize the function of some of the respiratory chains. ViaA stimulates the ATPase activity of RavA. The chain is Regulatory protein ViaA from Salmonella arizonae (strain ATCC BAA-731 / CDC346-86 / RSK2980).